Here is a 334-residue protein sequence, read N- to C-terminus: Protein-methionine-sulfoxide reductase catalytic subunit MsrP (334 aa).

The segment at residues 1-44 is a signal peptide (tat-type signal); that stretch reads MKKNQFLKESDVTAESVFFMKRRQVLKALGISAAAFSLPHAAHA. Residues Asn-88, 91–92, Cys-146, Thr-181, Asn-233, Arg-238, and 249–251 contribute to the Mo-molybdopterin site; these read YE and GIK.

This sequence belongs to the MsrP family. In terms of assembly, heterodimer of a catalytic subunit (MsrP) and a heme-binding subunit (MsrQ). The cofactor is Mo-molybdopterin. Predicted to be exported by the Tat system. The position of the signal peptide cleavage has not been experimentally proven.

Its subcellular location is the periplasm. The enzyme catalyses L-methionyl-[protein] + a quinone + H2O = L-methionyl-(S)-S-oxide-[protein] + a quinol. The catalysed reaction is L-methionyl-[protein] + a quinone + H2O = L-methionyl-(R)-S-oxide-[protein] + a quinol. In terms of biological role, part of the MsrPQ system that repairs oxidized periplasmic proteins containing methionine sulfoxide residues (Met-O), using respiratory chain electrons. Thus protects these proteins from oxidative-stress damage caused by reactive species of oxygen and chlorine generated by the host defense mechanisms. MsrPQ is essential for the maintenance of envelope integrity under bleach stress, rescuing a wide series of structurally unrelated periplasmic proteins from methionine oxidation, including the primary periplasmic chaperone SurA and the lipoprotein Pal. The catalytic subunit MsrP is non-stereospecific, being able to reduce both (R-) and (S-) diastereoisomers of methionine sulfoxide. The protein is Protein-methionine-sulfoxide reductase catalytic subunit MsrP of Escherichia coli O7:K1 (strain IAI39 / ExPEC).